The following is a 463-amino-acid chain: Asparagine--tRNA ligase (463 aa).

It belongs to the class-II aminoacyl-tRNA synthetase family. Homodimer.

It localises to the cytoplasm. The enzyme catalyses tRNA(Asn) + L-asparagine + ATP = L-asparaginyl-tRNA(Asn) + AMP + diphosphate + H(+). This chain is Asparagine--tRNA ligase, found in Alkaliphilus metalliredigens (strain QYMF).